The primary structure comprises 283 residues: Release factor glutamine methyltransferase (283 aa).

S-adenosyl-L-methionine-binding positions include 121–125 (GTGSG), aspartate 144, and asparagine 188. A substrate-binding site is contributed by 188 to 191 (NPPY).

Belongs to the protein N5-glutamine methyltransferase family. PrmC subfamily.

It catalyses the reaction L-glutaminyl-[peptide chain release factor] + S-adenosyl-L-methionine = N(5)-methyl-L-glutaminyl-[peptide chain release factor] + S-adenosyl-L-homocysteine + H(+). Methylates the class 1 translation termination release factors RF1/PrfA and RF2/PrfB on the glutamine residue of the universally conserved GGQ motif. The polypeptide is Release factor glutamine methyltransferase (Bacillus anthracis).